The following is a 690-amino-acid chain: Protease 2 (690 aa).

Residues S534, D619, and H654 each act as charge relay system in the active site.

This sequence belongs to the peptidase S9A family.

The enzyme catalyses Hydrolysis of -Arg-|-Xaa- and -Lys-|-Xaa- bonds in oligopeptides, even when P1' residue is proline.. Its function is as follows. Cleaves peptide bonds on the C-terminal side of lysyl and argininyl residues. In Moraxella lacunata, this protein is Protease 2 (ptrB).